The primary structure comprises 565 residues: Proline--tRNA ligase (565 aa).

It belongs to the class-II aminoacyl-tRNA synthetase family. ProS type 1 subfamily. Homodimer.

It localises to the cytoplasm. The catalysed reaction is tRNA(Pro) + L-proline + ATP = L-prolyl-tRNA(Pro) + AMP + diphosphate. Its function is as follows. Catalyzes the attachment of proline to tRNA(Pro) in a two-step reaction: proline is first activated by ATP to form Pro-AMP and then transferred to the acceptor end of tRNA(Pro). As ProRS can inadvertently accommodate and process non-cognate amino acids such as alanine and cysteine, to avoid such errors it has two additional distinct editing activities against alanine. One activity is designated as 'pretransfer' editing and involves the tRNA(Pro)-independent hydrolysis of activated Ala-AMP. The other activity is designated 'posttransfer' editing and involves deacylation of mischarged Ala-tRNA(Pro). The misacylated Cys-tRNA(Pro) is not edited by ProRS. The sequence is that of Proline--tRNA ligase from Lactobacillus delbrueckii subsp. bulgaricus (strain ATCC 11842 / DSM 20081 / BCRC 10696 / JCM 1002 / NBRC 13953 / NCIMB 11778 / NCTC 12712 / WDCM 00102 / Lb 14).